Reading from the N-terminus, the 559-residue chain is Phosphatase and actin regulator 3 (559 aa).

A disordered region spans residues 1–65; sequence MAASEDGSGC…GIRTPPVRRN (65 aa). Polar residues predominate over residues 15–24; it reads GRSQSDPSVL. Over residues 25 to 35 the composition is skewed to low complexity; that stretch reads TDSSATSSADA. Threonine 70 carries the phosphothreonine modification. Positions 82-342 are disordered; the sequence is KKKNEKLKQT…VERGKEREEA (261 aa). One copy of the RPEL 1 repeat lies at 93 to 118; the sequence is SALEKKMAGRQGREELIKKGLLEMME. Residues 95-113 are compositionally biased toward basic and acidic residues; that stretch reads LEKKMAGRQGREELIKKGL. The span at 134 to 151 shows a compositional bias: polar residues; that stretch reads SVQSEPPTPKSETLTSED. Residues 229–240 are compositionally biased toward pro residues; that stretch reads PSPPLLPTPPPK. Residue serine 230 is modified to Phosphoserine. Phosphothreonine is present on threonine 236. Composition is skewed to polar residues over residues 248 to 262 and 270 to 281; these read NVTGQATLFQASSMK and GQLSTPTGSPHL. Residues 293-342 show a composition bias toward basic and acidic residues; the sequence is VIEELHRALATKHRQDSFQGRESKGSPKKRLDVRLSRTSSVERGKEREEA. A coiled-coil region spans residues 346-369; sequence DGALENKRTAAKESEENKENLIIN. RPEL repeat units lie at residues 401–426, 439–464, and 477–502; these read ELLAVKLRNRPSKQELEDRNIFPRRT, MKLSKRLSQRPAVEELERRNILKQRN, and QRLTRKLNQRPTVDELRDRKILIRFS. The required for PP1CA binding and inhibition of PP1 activity stretch occupies residues 438–518; sequence EMKLSKRLSQ…KAQDYDRRAD (81 aa). A coiled-coil region spans residues 450 to 486; the sequence is AVEELERRNILKQRNDQTEQEERREIKQRLTRKLNQR.

It belongs to the phosphatase and actin regulator family. As to quaternary structure, binds actin and PPP1CA; thus inhibiting the protein phosphatase 1 (PP1) activity. In terms of tissue distribution, abundantly expressed in brain. Also found in several tumors such as lung carcinomas, nervous tumors and HL-60 leukemia cells. Isoform 3 is the major form in U-937, GOTO and HL-60 leukemia cells.

The protein localises to the nucleus matrix. This Homo sapiens (Human) protein is Phosphatase and actin regulator 3 (PHACTR3).